We begin with the raw amino-acid sequence, 98 residues long: snRNA-activating protein complex subunit 5 (98 aa).

Positions 75–98 are disordered; sequence ALELSTRSHVQEEEEEEEEEEEDS. The span at 86–98 shows a compositional bias: acidic residues; the sequence is EEEEEEEEEEEDS.

In terms of assembly, part of the SNAPc complex composed of 5 subunits: SNAPC1, SNAPC2, SNAPC3, SNAPC4 and SNAPC5. SNAPC5 interacts with SNAPC4.

It is found in the nucleus. Its function is as follows. Part of the SNAPc complex required for the transcription of both RNA polymerase II and III small-nuclear RNA genes. Binds to the proximal sequence element (PSE), a non-TATA-box basal promoter element common to these 2 types of genes. Recruits TBP and BRF2 to the U6 snRNA TATA box. The protein is snRNA-activating protein complex subunit 5 (SNAPC5) of Bos taurus (Bovine).